A 301-amino-acid polypeptide reads, in one-letter code: tRNA dimethylallyltransferase (301 aa).

Residue 8-15 participates in ATP binding; it reads GPTAVGKT. 10–15 is a substrate binding site; it reads TAVGKT. The interaction with substrate tRNA stretch occupies residues 33–36; that stretch reads DSRQ.

This sequence belongs to the IPP transferase family. As to quaternary structure, monomer. Mg(2+) serves as cofactor.

It carries out the reaction adenosine(37) in tRNA + dimethylallyl diphosphate = N(6)-dimethylallyladenosine(37) in tRNA + diphosphate. Its function is as follows. Catalyzes the transfer of a dimethylallyl group onto the adenine at position 37 in tRNAs that read codons beginning with uridine, leading to the formation of N6-(dimethylallyl)adenosine (i(6)A). In Thermosipho melanesiensis (strain DSM 12029 / CIP 104789 / BI429), this protein is tRNA dimethylallyltransferase.